Here is a 200-residue protein sequence, read N- to C-terminus: Ciliary microtubule inner protein 2C (200 aa).

The protein belongs to the CIMIP2 family. In terms of assembly, microtubule inner protein component of sperm flagellar doublet microtubules.

Its subcellular location is the cytoplasm. The protein resides in the cytoskeleton. It localises to the cilium axoneme. The protein localises to the flagellum axoneme. Microtubule inner protein (MIP) part of the dynein-decorated doublet microtubules (DMTs) in cilia axoneme, which is required for motile cilia beating. Binds to the intra-tubulin interfaces. This Mus musculus (Mouse) protein is Ciliary microtubule inner protein 2C (Cimip2c).